Here is a 284-residue protein sequence, read N- to C-terminus: Small ribosomal subunit protein uS2 (284 aa).

The protein belongs to the universal ribosomal protein uS2 family.

The polypeptide is Small ribosomal subunit protein uS2 (rpsB) (Mycoplasma genitalium (strain ATCC 33530 / DSM 19775 / NCTC 10195 / G37) (Mycoplasmoides genitalium)).